A 258-amino-acid polypeptide reads, in one-letter code: uncharacterized protein (258 aa).

4 consecutive transmembrane segments (helical) span residues 33-53 (LFVI…VTTN), 59-79 (FDSW…IFVF), 88-108 (LLYL…FSFF), and 140-160 (IIAL…WLIQ). Residues 237-258 (NNKINSELQPPSILNKNSKPIE) form a disordered region. Over residues 242-258 (SELQPPSILNKNSKPIE) the composition is skewed to polar residues.

The protein localises to the membrane. This is an uncharacterized protein from Dictyostelium discoideum (Social amoeba).